A 258-amino-acid polypeptide reads, in one-letter code: Aspartate/glutamate leucyltransferase (258 aa).

It belongs to the R-transferase family. Bpt subfamily.

The protein resides in the cytoplasm. It catalyses the reaction N-terminal L-glutamyl-[protein] + L-leucyl-tRNA(Leu) = N-terminal L-leucyl-L-glutamyl-[protein] + tRNA(Leu) + H(+). It carries out the reaction N-terminal L-aspartyl-[protein] + L-leucyl-tRNA(Leu) = N-terminal L-leucyl-L-aspartyl-[protein] + tRNA(Leu) + H(+). Its function is as follows. Functions in the N-end rule pathway of protein degradation where it conjugates Leu from its aminoacyl-tRNA to the N-termini of proteins containing an N-terminal aspartate or glutamate. This chain is Aspartate/glutamate leucyltransferase, found in Rhodopseudomonas palustris (strain BisB18).